Reading from the N-terminus, the 207-residue chain is Nitrile hydratase subunit alpha (207 aa).

4 residues coordinate Fe(3+): cysteine 110, cysteine 113, serine 114, and cysteine 115. Cysteine 113 carries the post-translational modification Cysteine sulfinic acid (-SO2H). Cysteine 115 carries the post-translational modification Cysteine sulfenic acid (-SOH).

Belongs to the nitrile hydratase subunit alpha family. In terms of assembly, heterodimer of an alpha and a beta chain. It depends on Fe(3+) as a cofactor. Post-translationally, oxidation on Cys-113 is essential for the activity. In terms of processing, oxidation on Cys-115 stabilizes the Fe-NO ligand coordinated in the inactive form.

The catalysed reaction is an aliphatic primary amide = an aliphatic nitrile + H2O. Inactivated by nitrosylation of the iron center in the dark and activated by photo-induced nitric oxide (NO) release. Inactivated by oxidation of Cys-115 to a sulfenic acid. Its function is as follows. NHase catalyzes the hydration of various nitrile compounds to the corresponding amides. Industrial production of acrylamide is now being developed using some of the enzymes of this class. The sequence is that of Nitrile hydratase subunit alpha (nthA) from Rhodococcus erythropolis (Arthrobacter picolinophilus).